Reading from the N-terminus, the 279-residue chain is DegV domain-containing protein CPE1310 (279 aa).

The 274-residue stretch at 4 to 277 folds into the DegV domain; sequence IKIITDSTCD…PKVCALFYVE (274 aa). 2 residues coordinate hexadecanoate: Thr62 and Ser94.

In terms of biological role, may bind long-chain fatty acids, such as palmitate, and may play a role in lipid transport or fatty acid metabolism. This Clostridium perfringens (strain 13 / Type A) protein is DegV domain-containing protein CPE1310.